A 48-amino-acid chain; its full sequence is U1-theraphotoxin-Agm1a (48 aa).

Cystine bridges form between Cys4–Cys34, Cys8–Cys40, and Cys22–Cys45. Position 44 is a methionine sulfoxide; partial (Met44).

It belongs to the neurotoxin 12 (Hwtx-2) family. 01 (Ap1a) subfamily. Expressed by the venom gland.

The protein resides in the secreted. Is toxic to both insects and mammals. Induces reversible paralysis when injected into S.frugiperda larvae. Reduces both the amplitude and frequency of responses from muscle (GF-TTM and GF-DLM) pathways in the D.melanogaster giant fiber circuit, suggesting an action at the neuromuscular junction, which is mediated by glutamatergic receptors. In mice, intracranial injection of 30 ug causes increased urination, myoclonus, hypermotility with circular movements followed by respiratory and generalized seizures resulting in death within 25-35 minutes of injection. The polypeptide is U1-theraphotoxin-Agm1a (Acanthoscurria gomesiana (Tarantula spider)).